The primary structure comprises 132 residues: uncharacterized protein (132 aa).

This is an uncharacterized protein from Bacillus subtilis (strain 168).